Consider the following 335-residue polypeptide: uncharacterized protein (335 aa).

Residues 21 to 258 (VMTSDLRKVY…QNTYHVQGQN (238 aa)) enclose the ABC transporter domain. 60-67 (GPNGAGKT) serves as a coordination point for ATP.

The protein belongs to the ABC transporter superfamily.

This is an uncharacterized protein from Nostoc sp. (strain PCC 7120 / SAG 25.82 / UTEX 2576).